The following is a 465-amino-acid chain: Cysteine--tRNA ligase (465 aa).

Cys30 is a binding site for Zn(2+). The 'HIGH' region motif lies at 32–42 (ITVYDYCHVGH). Residues Cys214, His239, and Glu243 each coordinate Zn(2+). The 'KMSKS' region motif lies at 271–275 (KMSKS). An ATP-binding site is contributed by Lys274.

Belongs to the class-I aminoacyl-tRNA synthetase family. In terms of assembly, monomer. The cofactor is Zn(2+).

The protein resides in the cytoplasm. The catalysed reaction is tRNA(Cys) + L-cysteine + ATP = L-cysteinyl-tRNA(Cys) + AMP + diphosphate. In Burkholderia cenocepacia (strain ATCC BAA-245 / DSM 16553 / LMG 16656 / NCTC 13227 / J2315 / CF5610) (Burkholderia cepacia (strain J2315)), this protein is Cysteine--tRNA ligase.